A 482-amino-acid polypeptide reads, in one-letter code: tRNA sulfurtransferase (482 aa).

The region spanning 61–165 (NQVLTAVTHT…NEKLNLVIAR (105 aa)) is the THUMP domain. Residues 183-184 (LI), Lys265, Gly287, and Gln296 each bind ATP. Cys344 and Cys456 form a disulfide bridge. Positions 404–482 (LGSDVVVLDI…GYKNVKVYRP (79 aa)) constitute a Rhodanese domain. Cys456 functions as the Cysteine persulfide intermediate in the catalytic mechanism.

Belongs to the ThiI family.

It localises to the cytoplasm. It carries out the reaction [ThiI sulfur-carrier protein]-S-sulfanyl-L-cysteine + a uridine in tRNA + 2 reduced [2Fe-2S]-[ferredoxin] + ATP + H(+) = [ThiI sulfur-carrier protein]-L-cysteine + a 4-thiouridine in tRNA + 2 oxidized [2Fe-2S]-[ferredoxin] + AMP + diphosphate. The enzyme catalyses [ThiS sulfur-carrier protein]-C-terminal Gly-Gly-AMP + S-sulfanyl-L-cysteinyl-[cysteine desulfurase] + AH2 = [ThiS sulfur-carrier protein]-C-terminal-Gly-aminoethanethioate + L-cysteinyl-[cysteine desulfurase] + A + AMP + 2 H(+). It functions in the pathway cofactor biosynthesis; thiamine diphosphate biosynthesis. In terms of biological role, catalyzes the ATP-dependent transfer of a sulfur to tRNA to produce 4-thiouridine in position 8 of tRNAs, which functions as a near-UV photosensor. Also catalyzes the transfer of sulfur to the sulfur carrier protein ThiS, forming ThiS-thiocarboxylate. This is a step in the synthesis of thiazole, in the thiamine biosynthesis pathway. The sulfur is donated as persulfide by IscS. This chain is tRNA sulfurtransferase, found in Aliivibrio salmonicida (strain LFI1238) (Vibrio salmonicida (strain LFI1238)).